Here is a 405-residue protein sequence, read N- to C-terminus: MANIVVKRLERTPIDETPVEIVERKGIGHPDSICDGIAESVSVALCKMYKEKMGVVLHHNTDQVELVGGYAYPELGGGCMVSPIYVLLSGRATMEVLDKKSGKIIKLPVNTTAVNAARDYLKKAIRNMDLEKDVVVDCRIGQGSVDLVEVFDRKRSEIPHANDTSFGVGHAPLSTTEKIVLETEKLLNSDALKAEIPAVGEDIKVMGLREGKKITLTIAMAAVDKYVNSCADYVKVKELAKAKVEENAKKYLDSHELEVCINTADDDEDCIFLTVTGTSAEMGDDGSVGRGNRANGLITPFRPMSMEATSGKNPINHIGKIYNILSNIIAEDVAKIEGVRECQIRILSQIGKPITEPKILDIEMIPENGFELEELSPKAKEVAQKWLENISEVTERIVSGNVTTF.

141 to 146 (GQGSVD) provides a ligand contact to ATP.

It belongs to the AdoMet synthase 2 family. It depends on Mg(2+) as a cofactor.

It catalyses the reaction L-methionine + ATP + H2O = S-adenosyl-L-methionine + phosphate + diphosphate. Its pathway is amino-acid biosynthesis; S-adenosyl-L-methionine biosynthesis; S-adenosyl-L-methionine from L-methionine: step 1/1. Its function is as follows. Catalyzes the formation of S-adenosylmethionine from methionine and ATP. In Methanococcus maripaludis (strain C5 / ATCC BAA-1333), this protein is S-adenosylmethionine synthase.